Consider the following 48-residue polypeptide: ATP synthase protein 8 (48 aa).

The helical transmembrane segment at 4 to 24 (LVPFFFVNQVVYAFVILTVLI) threads the bilayer.

It belongs to the ATPase protein 8 family. In terms of assembly, F-type ATPases have 2 components, CF(1) - the catalytic core - and CF(0) - the membrane proton channel.

The protein resides in the mitochondrion membrane. Functionally, mitochondrial membrane ATP synthase (F(1)F(0) ATP synthase or Complex V) produces ATP from ADP in the presence of a proton gradient across the membrane which is generated by electron transport complexes of the respiratory chain. F-type ATPases consist of two structural domains, F(1) - containing the extramembraneous catalytic core and F(0) - containing the membrane proton channel, linked together by a central stalk and a peripheral stalk. During catalysis, ATP synthesis in the catalytic domain of F(1) is coupled via a rotary mechanism of the central stalk subunits to proton translocation. Part of the complex F(0) domain. Minor subunit located with subunit a in the membrane. This Aspergillus amstelodami protein is ATP synthase protein 8 (atp8).